The chain runs to 689 residues: Glycine--tRNA ligase beta subunit (689 aa).

The protein belongs to the class-II aminoacyl-tRNA synthetase family. Tetramer of two alpha and two beta subunits.

It is found in the cytoplasm. It catalyses the reaction tRNA(Gly) + glycine + ATP = glycyl-tRNA(Gly) + AMP + diphosphate. The protein is Glycine--tRNA ligase beta subunit of Shewanella baltica (strain OS185).